Here is a 149-residue protein sequence, read N- to C-terminus: NADH-ubiquinone oxidoreductase chain 6 (149 aa).

The next 4 membrane-spanning stretches (helical) occupy residues 23–43 (ILML…FYFI), 51–71 (MMMI…MISL), 83–103 (LSVT…MTKL), and 114–134 (VNFV…LTII).

Belongs to the complex I subunit 6 family.

It is found in the mitochondrion membrane. It catalyses the reaction a ubiquinone + NADH + 5 H(+)(in) = a ubiquinol + NAD(+) + 4 H(+)(out). In terms of biological role, core subunit of the mitochondrial membrane respiratory chain NADH dehydrogenase (Complex I) that is believed to belong to the minimal assembly required for catalysis. Complex I functions in the transfer of electrons from NADH to the respiratory chain. The immediate electron acceptor for the enzyme is believed to be ubiquinone. This Rhipicephalus sanguineus (Brown dog tick) protein is NADH-ubiquinone oxidoreductase chain 6 (ND6).